Reading from the N-terminus, the 327-residue chain is GTPase Obg (327 aa).

Residues 1–159 (MQFIDQANII…WEVQLELKLL (159 aa)) enclose the Obg domain. Positions 160–327 (AEVGIIGLPN…SLLSEVWNRI (168 aa)) constitute an OBG-type G domain. ATP is bound by residues 166–173 (GLPNAGKS), 191–195 (FTTLI), 213–216 (DIPG), 280–283 (NKKE), and 309–311 (SSA). Residues Ser173 and Thr193 each coordinate Mg(2+).

The protein belongs to the TRAFAC class OBG-HflX-like GTPase superfamily. OBG GTPase family. Monomer. It depends on Mg(2+) as a cofactor.

The protein localises to the cytoplasm. Functionally, an essential GTPase which binds GTP, GDP and possibly (p)ppGpp with moderate affinity, with high nucleotide exchange rates and a fairly low GTP hydrolysis rate. Plays a role in control of the cell cycle, stress response, ribosome biogenesis and in those bacteria that undergo differentiation, in morphogenesis control. This is GTPase Obg from Prochlorococcus marinus (strain MIT 9515).